Reading from the N-terminus, the 370-residue chain is 4-hydroxy-3-methylbut-2-en-1-yl diphosphate synthase (flavodoxin) (370 aa).

Residues Cys270, Cys273, Cys305, and Glu312 each contribute to the [4Fe-4S] cluster site.

It belongs to the IspG family. [4Fe-4S] cluster is required as a cofactor.

The enzyme catalyses (2E)-4-hydroxy-3-methylbut-2-enyl diphosphate + oxidized [flavodoxin] + H2O + 2 H(+) = 2-C-methyl-D-erythritol 2,4-cyclic diphosphate + reduced [flavodoxin]. It participates in isoprenoid biosynthesis; isopentenyl diphosphate biosynthesis via DXP pathway; isopentenyl diphosphate from 1-deoxy-D-xylulose 5-phosphate: step 5/6. In terms of biological role, converts 2C-methyl-D-erythritol 2,4-cyclodiphosphate (ME-2,4cPP) into 1-hydroxy-2-methyl-2-(E)-butenyl 4-diphosphate. The sequence is that of 4-hydroxy-3-methylbut-2-en-1-yl diphosphate synthase (flavodoxin) from Marinomonas sp. (strain MWYL1).